The following is a 378-amino-acid chain: Manganese peroxidase 1 (378 aa).

An N-terminal signal peptide occupies residues 1-21; the sequence is MAFKSLIAFVALAAAVRAAPT. Disulfide bonds link Cys24/Cys36, Cys35/Cys310, Cys54/Cys138, Cys274/Cys340, and Cys362/Cys369. 2 residues coordinate Mn(2+): Glu56 and Glu60. The active-site Proton acceptor is the His67. Asp68, Gly83, Asp85, and Ser87 together coordinate Ca(2+). 2 N-linked (GlcNAc...) asparagine glycosylation sites follow: Asn97 and Asn152. His194 contacts heme b. Ser195 lines the Ca(2+) pocket. Asp200 contacts Mn(2+). 4 residues coordinate Ca(2+): Asp212, Thr214, Thr217, and Asp219. An N-linked (GlcNAc...) asparagine glycan is attached at Asn238.

The protein belongs to the peroxidase family. Ligninase subfamily. It depends on Ca(2+) as a cofactor. The cofactor is heme b.

The protein resides in the secreted. It catalyses the reaction 2 Mn(2+) + H2O2 + 2 H(+) = 2 Mn(3+) + 2 H2O. Its function is as follows. Catalyzes the oxidation of Mn(2+) to Mn(3+). The latter, acting as a diffusible redox mediator, is capable of oxidizing a variety of lignin compounds. The sequence is that of Manganese peroxidase 1 (MNP1) from Phanerodontia chrysosporium (White-rot fungus).